The following is a 134-amino-acid chain: Large ribosomal subunit protein eL32 (134 aa).

Belongs to the eukaryotic ribosomal protein eL32 family.

This chain is Large ribosomal subunit protein eL32 (RPL32), found in Tetrahymena thermophila (strain SB210).